The primary structure comprises 25 residues: Caerin-1.6 (25 aa).

Leucine amide is present on Leu25.

It belongs to the frog skin active peptide (FSAP) family. Caerin subfamily. In terms of tissue distribution, expressed by the skin dorsal glands.

Its subcellular location is the secreted. In terms of biological role, antimicrobial peptide. Adopts an alpha helical conformation which can disrupt bacterial membranes. Strongly inhibits the formation of NO by neuronal nitric oxide synthase (nNOS) at micromolar concentrations. Acts by a non-competitive mechanism, probably by binding to calcium/calmodulin and as a consequence blocking calmodulin attachment to nNOS. Its function is as follows. Does not show antimicrobial activity. This is Caerin-1.6 from Ranoidea chloris (Red-eyed tree frog).